A 573-amino-acid polypeptide reads, in one-letter code: Trehalose synthase (573 aa).

Substrate is bound at residue aspartate 70. Asparagine 112 is a Ca(2+) binding site. Residues histidine 113 and glutamine 178 each coordinate substrate. Aspartate 180 is a Ca(2+) binding site. Substrate is bound at residue arginine 208. Aspartate 210 serves as the catalytic Nucleophile. Residues tyrosine 214, leucine 215, and glutamate 217 each coordinate Ca(2+). Glutamate 252 (proton donor) is an active-site residue. 2 residues coordinate substrate: histidine 326 and aspartate 327.

The protein belongs to the glycosyl hydrolase 13 family. TreS subfamily.

It carries out the reaction D-maltose = alpha,alpha-trehalose. In terms of biological role, catalyzes the reversible interconversion of maltose and alpha,alpha-trehalose by transglucosylation. The polypeptide is Trehalose synthase (treS) (Pimelobacter sp. (strain R48)).